Here is a 428-residue protein sequence, read N- to C-terminus: Enolase (428 aa).

Gln163 is a (2R)-2-phosphoglycerate binding site. Glu205 acts as the Proton donor in catalysis. Mg(2+) is bound by residues Asp242, Glu283, and Asp310. Positions 335, 364, 365, and 386 each coordinate (2R)-2-phosphoglycerate. Lys335 acts as the Proton acceptor in catalysis.

The protein belongs to the enolase family. The cofactor is Mg(2+).

The protein resides in the cytoplasm. It is found in the secreted. Its subcellular location is the cell surface. The enzyme catalyses (2R)-2-phosphoglycerate = phosphoenolpyruvate + H2O. It participates in carbohydrate degradation; glycolysis; pyruvate from D-glyceraldehyde 3-phosphate: step 4/5. Catalyzes the reversible conversion of 2-phosphoglycerate (2-PG) into phosphoenolpyruvate (PEP). It is essential for the degradation of carbohydrates via glycolysis. This is Enolase from Saccharopolyspora erythraea (strain ATCC 11635 / DSM 40517 / JCM 4748 / NBRC 13426 / NCIMB 8594 / NRRL 2338).